Here is a 921-residue protein sequence, read N- to C-terminus: TRPM8 channel-associated factor 1 (921 aa).

The 300-residue stretch at 542–841 folds into the Peptidase M60 domain; that stretch reads YCWMSTGLYI…TYLQLQEAFG (300 aa).

This sequence belongs to the TCAF family. In terms of assembly, interacts with TRPM8 (via N-terminus and C-terminus domains); the interaction inhibits TRPM8 channel activity. Interacts with TRPV6.

The protein localises to the cell membrane. Its function is as follows. Positively regulates the plasma membrane cation channel TRPM8 activity. Involved in the recruitment of TRPM8 to the cell surface. Promotes prostate cancer cell migration inhibition in a TRPM8-dependent manner. The protein is TRPM8 channel-associated factor 1 of Bos taurus (Bovine).